The primary structure comprises 140 residues: Lysozyme D (140 aa).

The first 18 residues, 1-18 (MKAFIVLVALACAAPAFG), serve as a signal peptide directing secretion. One can recognise a C-type lysozyme domain in the interval 19 to 140 (RTMDRCSLAR…GWLPSIDDCF (122 aa)). Cystine bridges form between Cys24–Cys139, Cys45–Cys129, Cys80–Cys96, and Cys92–Cys110. Catalysis depends on residues Glu50 and Asp68.

It belongs to the glycosyl hydrolase 22 family. In terms of tissue distribution, found in the midgut.

The enzyme catalyses Hydrolysis of (1-&gt;4)-beta-linkages between N-acetylmuramic acid and N-acetyl-D-glucosamine residues in a peptidoglycan and between N-acetyl-D-glucosamine residues in chitodextrins.. Unlikely to play an active role in the humoral immune defense. May have a function in the digestion of bacteria in the food. In Drosophila melanogaster (Fruit fly), this protein is Lysozyme D (LysD).